A 215-amino-acid chain; its full sequence is Probable transaldolase (215 aa).

Residue Lys-83 is the Schiff-base intermediate with substrate of the active site.

Belongs to the transaldolase family. Type 3B subfamily.

It is found in the cytoplasm. The catalysed reaction is D-sedoheptulose 7-phosphate + D-glyceraldehyde 3-phosphate = D-erythrose 4-phosphate + beta-D-fructose 6-phosphate. The protein operates within carbohydrate degradation; pentose phosphate pathway; D-glyceraldehyde 3-phosphate and beta-D-fructose 6-phosphate from D-ribose 5-phosphate and D-xylulose 5-phosphate (non-oxidative stage): step 2/3. Functionally, transaldolase is important for the balance of metabolites in the pentose-phosphate pathway. This chain is Probable transaldolase, found in Pelotomaculum thermopropionicum (strain DSM 13744 / JCM 10971 / SI).